Reading from the N-terminus, the 378-residue chain is Flap endonuclease 1 (378 aa).

The tract at residues 1-104 is N-domain; that stretch reads MGVKDLSKVI…SELEKRTERR (104 aa). Position 34 (D34) interacts with Mg(2+). Residues R47 and R70 each contribute to the DNA site. Mg(2+) is bound at residue D86. The interval 90-113 is disordered; sequence PQMKTSELEKRTERRTEAEKQRND. Over residues 95-113 the composition is skewed to basic and acidic residues; that stretch reads SELEKRTERRTEAEKQRND. Residues 122 to 253 form an I-domain region; that stretch reads SVNKFEKRLV…KKAFELIKKY (132 aa). Mg(2+) is bound by residues E158, E160, D179, and D181. DNA is bound at residue E158. DNA contacts are provided by G231 and D233. D233 provides a ligand contact to Mg(2+). The segment at 336–344 is interaction with PCNA; it reads QQARIDSFF. The tract at residues 348-378 is disordered; sequence KVVTSETTKRKNEEKNNLKKRGPSLGKKAKK. Positions 354–364 are enriched in basic and acidic residues; it reads TTKRKNEEKNN. Positions 365–378 are enriched in basic residues; that stretch reads LKKRGPSLGKKAKK.

The protein belongs to the XPG/RAD2 endonuclease family. FEN1 subfamily. In terms of assembly, interacts with PCNA. Three molecules of FEN1 bind to one PCNA trimer with each molecule binding to one PCNA monomer. PCNA stimulates the nuclease activity without altering cleavage specificity. It depends on Mg(2+) as a cofactor. Post-translationally, phosphorylated. Phosphorylation upon DNA damage induces relocalization to the nuclear plasma.

It is found in the nucleus. It localises to the nucleolus. The protein resides in the nucleoplasm. Its subcellular location is the mitochondrion. In terms of biological role, structure-specific nuclease with 5'-flap endonuclease and 5'-3' exonuclease activities involved in DNA replication and repair. During DNA replication, cleaves the 5'-overhanging flap structure that is generated by displacement synthesis when DNA polymerase encounters the 5'-end of a downstream Okazaki fragment. It enters the flap from the 5'-end and then tracks to cleave the flap base, leaving a nick for ligation. Also involved in the long patch base excision repair (LP-BER) pathway, by cleaving within the apurinic/apyrimidinic (AP) site-terminated flap. Acts as a genome stabilization factor that prevents flaps from equilibrating into structures that lead to duplications and deletions. Also possesses 5'-3' exonuclease activity on nicked or gapped double-stranded DNA, and exhibits RNase H activity. Also involved in replication and repair of rDNA and in repairing mitochondrial DNA. The sequence is that of Flap endonuclease 1 from Brugia malayi (Filarial nematode worm).